A 327-amino-acid polypeptide reads, in one-letter code: Zinc transport protein ZntB (327 aa).

Over 1 to 273 (MEAIKGSDVN…ARRTYTMSLM (273 aa)) the chain is Cytoplasmic. Residues 274 to 294 (AMVFLPSTFLTGLFGVNLGGI) form a helical membrane-spanning segment. Residues 295–300 (PGGGWR) are Periplasmic-facing. Residues 301–321 (FGFSLFCILLVVLIGGVTLWL) traverse the membrane as a helical segment. Residues 322–327 (HRSKWL) lie on the Cytoplasmic side of the membrane.

It belongs to the CorA metal ion transporter (MIT) (TC 1.A.35) family.

The protein localises to the cell inner membrane. The enzyme catalyses Zn(2+)(out) + H(+)(out) = Zn(2+)(in) + H(+)(in). In terms of biological role, zinc transporter. Acts as a Zn(2+):proton symporter, which likely mediates zinc ion uptake. The protein is Zinc transport protein ZntB of Salmonella agona (strain SL483).